The primary structure comprises 109 residues: uncharacterized protein (109 aa).

The HTH cro/C1-type domain occupies 42-100 (LEEKLKQEKIDRKYLAEVTNIPYTTVSRIMRAEANREFNPEIDTILKIAKYFNCTMDEV). Positions 53 to 72 (RKYLAEVTNIPYTTVSRIMR) form a DNA-binding region, H-T-H motif.

This is an uncharacterized protein from Rickettsia conorii (strain ATCC VR-613 / Malish 7).